Consider the following 218-residue polypeptide: uncharacterized protein (218 aa).

One can recognise a Toprim domain in the interval 111–193; it reads NSIYLVEGDF…ITKVIEIKAA (83 aa).

This is an uncharacterized protein from Mycoplasma genitalium (strain ATCC 33530 / DSM 19775 / NCTC 10195 / G37) (Mycoplasmoides genitalium).